The chain runs to 154 residues: Putative NADPH-dependent 7-cyano-7-deazaguanine reductase (154 aa).

Catalysis depends on Asp-52, which acts as the Proton donor. Substrate-binding positions include 67-69 and 86-87; these read VES and HE.

It belongs to the GTP cyclohydrolase I family. QueF type 1 subfamily.

The protein localises to the cytoplasm. The catalysed reaction is 7-aminomethyl-7-carbaguanine + 2 NADP(+) = 7-cyano-7-deazaguanine + 2 NADPH + 3 H(+). It functions in the pathway tRNA modification; tRNA-queuosine biosynthesis. Catalyzes the NADPH-dependent reduction of 7-cyano-7-deazaguanine (preQ0) to 7-aminomethyl-7-deazaguanine (preQ1). This is Putative NADPH-dependent 7-cyano-7-deazaguanine reductase from Streptococcus pneumoniae (strain ATCC BAA-255 / R6).